A 73-amino-acid chain; its full sequence is uncharacterized protein (73 aa).

A signal peptide spans 1 to 28 (MKFLLSVIAGLLILALYLFWKVQPPVWI).

This is an uncharacterized protein from Bacillus subtilis (strain 168).